We begin with the raw amino-acid sequence, 392 residues long: Probable tRNA sulfurtransferase (392 aa).

The region spanning 63-169 is the THUMP domain; that stretch reads GRAADAAADT…DAEAFVFLTH (107 aa). Residues 187 to 188, Arg-270, Gly-292, and Gln-301 each bind ATP; that span reads LV.

This sequence belongs to the ThiI family.

Its subcellular location is the cytoplasm. It catalyses the reaction [ThiI sulfur-carrier protein]-S-sulfanyl-L-cysteine + a uridine in tRNA + 2 reduced [2Fe-2S]-[ferredoxin] + ATP + H(+) = [ThiI sulfur-carrier protein]-L-cysteine + a 4-thiouridine in tRNA + 2 oxidized [2Fe-2S]-[ferredoxin] + AMP + diphosphate. The catalysed reaction is [ThiS sulfur-carrier protein]-C-terminal Gly-Gly-AMP + S-sulfanyl-L-cysteinyl-[cysteine desulfurase] + AH2 = [ThiS sulfur-carrier protein]-C-terminal-Gly-aminoethanethioate + L-cysteinyl-[cysteine desulfurase] + A + AMP + 2 H(+). The protein operates within cofactor biosynthesis; thiamine diphosphate biosynthesis. In terms of biological role, catalyzes the ATP-dependent transfer of a sulfur to tRNA to produce 4-thiouridine in position 8 of tRNAs, which functions as a near-UV photosensor. Also catalyzes the transfer of sulfur to the sulfur carrier protein ThiS, forming ThiS-thiocarboxylate. This is a step in the synthesis of thiazole, in the thiamine biosynthesis pathway. The sulfur is donated as persulfide by IscS. The polypeptide is Probable tRNA sulfurtransferase (Halobacterium salinarum (strain ATCC 29341 / DSM 671 / R1)).